The chain runs to 205 residues: Ribonuclease HII (205 aa).

Residues 15-205 (SRVCGIDEAG…SFKLRKLGEK (191 aa)) form the RNase H type-2 domain. Positions 21, 22, and 117 each coordinate a divalent metal cation.

The protein belongs to the RNase HII family. The cofactor is Mn(2+). Mg(2+) is required as a cofactor.

It is found in the cytoplasm. The catalysed reaction is Endonucleolytic cleavage to 5'-phosphomonoester.. Its function is as follows. Endonuclease that specifically degrades the RNA of RNA-DNA hybrids. In Chlorobaculum parvum (strain DSM 263 / NCIMB 8327) (Chlorobium vibrioforme subsp. thiosulfatophilum), this protein is Ribonuclease HII.